We begin with the raw amino-acid sequence, 290 residues long: Signal peptidase I (290 aa).

The Cytoplasmic portion of the chain corresponds to M1–S13. The helical transmembrane segment at W14–I34 threads the bilayer. Over P35–H290 the chain is Extracellular. Catalysis depends on residues S38 and K106.

Belongs to the peptidase S26 family.

Its subcellular location is the cell membrane. The enzyme catalyses Cleavage of hydrophobic, N-terminal signal or leader sequences from secreted and periplasmic proteins.. This is Signal peptidase I (lepB) from Helicobacter pylori (strain ATCC 700392 / 26695) (Campylobacter pylori).